The sequence spans 213 residues: Orotate phosphoribosyltransferase (213 aa).

Residue K26 coordinates 5-phospho-alpha-D-ribose 1-diphosphate. 34 to 35 (FF) is a binding site for orotate. 5-phospho-alpha-D-ribose 1-diphosphate is bound by residues 72-73 (YK), R99, K100, K103, H105, and 124-132 (DDVITAGTA). The orotate site is built by T128 and R156.

This sequence belongs to the purine/pyrimidine phosphoribosyltransferase family. PyrE subfamily. In terms of assembly, homodimer. Mg(2+) serves as cofactor.

The catalysed reaction is orotidine 5'-phosphate + diphosphate = orotate + 5-phospho-alpha-D-ribose 1-diphosphate. The protein operates within pyrimidine metabolism; UMP biosynthesis via de novo pathway; UMP from orotate: step 1/2. In terms of biological role, catalyzes the transfer of a ribosyl phosphate group from 5-phosphoribose 1-diphosphate to orotate, leading to the formation of orotidine monophosphate (OMP). The chain is Orotate phosphoribosyltransferase from Actinobacillus pleuropneumoniae serotype 5b (strain L20).